Here is a 136-residue protein sequence, read N- to C-terminus: Small ribosomal subunit protein uS9 (136 aa).

This sequence belongs to the universal ribosomal protein uS9 family.

This chain is Small ribosomal subunit protein uS9, found in Synechococcus sp. (strain JA-2-3B'a(2-13)) (Cyanobacteria bacterium Yellowstone B-Prime).